Consider the following 253-residue polypeptide: Chitooligosaccharide deacetylase (253 aa).

Residues His61 and His126 each contribute to the Mg(2+) site.

Belongs to the YdjC deacetylase family. ChbG subfamily. As to quaternary structure, homodimer. Mg(2+) serves as cofactor.

It localises to the cytoplasm. The catalysed reaction is N,N'-diacetylchitobiose + H2O = N-acetyl-beta-D-glucosaminyl-(1-&gt;4)-D-glucosamine + acetate. It carries out the reaction diacetylchitobiose-6'-phosphate + H2O = N'-monoacetylchitobiose-6'-phosphate + acetate. It functions in the pathway glycan degradation; chitin degradation. Functionally, involved in the degradation of chitin. ChbG is essential for growth on the acetylated chitooligosaccharides chitobiose and chitotriose but is dispensable for growth on cellobiose and chitosan dimer, the deacetylated form of chitobiose. Deacetylation of chitobiose-6-P and chitotriose-6-P is necessary for both the activation of the chb promoter by the regulatory protein ChbR and the hydrolysis of phosphorylated beta-glucosides by the phospho-beta-glucosidase ChbF. Catalyzes the removal of only one acetyl group from chitobiose-6-P to yield monoacetylchitobiose-6-P, the inducer of ChbR and the substrate of ChbF. This chain is Chitooligosaccharide deacetylase, found in Serratia marcescens.